Reading from the N-terminus, the 197-residue chain is uncharacterized protein (197 aa).

A signal peptide spans 1 to 23; the sequence is MSARAPKELRLALPPCLLNRTFA. The Extracellular portion of the chain corresponds to 24 to 61; the sequence is SPNASGSGNTGARGPGAVGSGTCITQVGQQLFQSFSST. N-linked (GlcNAc...) asparagine glycosylation is present at asparagine 26. The chain crosses the membrane as a helical span at residues 62 to 82; it reads LVLIVLVTLIFCLIVLSLSTF. The Cytoplasmic segment spans residues 83-197; that stretch reads HIHKRRMKKR…EGLLQTVVLS (115 aa). A disordered region spans residues 94–180; sequence MQRAQEEYER…SSPQGAHAAS (87 aa). Composition is skewed to basic and acidic residues over residues 96–107 and 125–136; these read RAQEEYERDHCS and HAKETRLERQPR. Low complexity predominate over residues 141–161; sequence CAPSNASSLSSSSPGLPCQGP. Over residues 162–171 the composition is skewed to pro residues; the sequence is CAPPPPPPAS.

The protein localises to the membrane. This is an uncharacterized protein from Homo sapiens (Human).